A 190-amino-acid chain; its full sequence is U1 small nuclear ribonucleoprotein C-1 (190 aa).

The segment at 4–36 adopts a Matrin-type zinc-finger fold; the sequence is YYCDYCDVFLVSESPSVRKAHNSGRNHLTNVRD. The disordered stretch occupies residues 57–190; sequence FETGGGNSTS…PDRARQLGLI (134 aa). Residues 72–82 are compositionally biased toward pro residues; the sequence is GNPPGSQPGPP. Positions 109–124 are enriched in low complexity; the sequence is AMLALMNGQNGMSSPG. Residues 125–141 show a composition bias toward pro residues; it reads SGPPPMRFAGPPIPNNM. The segment covering 180-190 has biased composition (basic and acidic residues); the sequence is NPDRARQLGLI.

It belongs to the U1 small nuclear ribonucleoprotein C family. In terms of assembly, U1 snRNP is composed of the 7 core Sm proteins B/B', D1, D2, D3, E, F and G that assemble in a heptameric protein ring on the Sm site of the small nuclear RNA to form the core snRNP, and at least 3 U1 snRNP-specific proteins U1-70K, U1-A and U1-C. U1-C interacts with U1 snRNA and the 5' splice-site region of the pre-mRNA.

The protein resides in the nucleus. Functionally, component of the spliceosomal U1 snRNP, which is essential for recognition of the pre-mRNA 5' splice-site and the subsequent assembly of the spliceosome. U1-C is directly involved in initial 5' splice-site recognition for both constitutive and regulated alternative splicing. The interaction with the 5' splice-site seems to precede base-pairing between the pre-mRNA and the U1 snRNA. Stimulates commitment or early (E) complex formation by stabilizing the base pairing of the 5' end of the U1 snRNA and the 5' splice-site region. This is U1 small nuclear ribonucleoprotein C-1 from Puccinia graminis f. sp. tritici (strain CRL 75-36-700-3 / race SCCL) (Black stem rust fungus).